Reading from the N-terminus, the 718-residue chain is Catalase-peroxidase (718 aa).

Residues 1–24 (MDQKSDNAGKCPVAHTVPKGRSNR) are disordered. The segment at residues 95 to 217 (WHSAGTYRIT…LAAVQMGLIY (123 aa)) is a cross-link (tryptophyl-tyrosyl-methioninium (Trp-Tyr) (with M-243)). Residue H96 is the Proton acceptor of the active site. The tryptophyl-tyrosyl-methioninium (Tyr-Met) (with W-95) cross-link spans 217 to 243 (YVNPEGPNGNPDPVAAAREIRETFARM). H258 lines the heme b pocket.

The protein belongs to the peroxidase family. Peroxidase/catalase subfamily. Homodimer or homotetramer. It depends on heme b as a cofactor. In terms of processing, formation of the three residue Trp-Tyr-Met cross-link is important for the catalase, but not the peroxidase activity of the enzyme.

The catalysed reaction is H2O2 + AH2 = A + 2 H2O. The enzyme catalyses 2 H2O2 = O2 + 2 H2O. Functionally, bifunctional enzyme with both catalase and broad-spectrum peroxidase activity. The polypeptide is Catalase-peroxidase (Sinorhizobium fredii (strain NBRC 101917 / NGR234)).